We begin with the raw amino-acid sequence, 718 residues long: Cyclomaltodextrin glucanotransferase (718 aa).

The N-terminal stretch at 1 to 34 (MFQMAKRAFLSTTLTLGLLAGSALPFLPASAAYA) is a signal peptide. The interval 35-172 (DPDIAVTNKQ…GIKIIIDFAP (138 aa)) is A1. Ca(2+) is bound by residues Asp61, Asn63, Asn66, and Asn67. The cysteines at positions 77 and 84 are disulfide-linked. The Ca(2+) site is built by Gly85 and Asp87. 134 to 135 (YW) contacts substrate. Asn173 contributes to the Ca(2+) binding site. A b region spans residues 173 to 236 (NHTSPAMETD…NLYDLADFNH (64 aa)). His174 is a binding site for substrate. Ile224 provides a ligand contact to Ca(2+). 227–230 (NLYD) contacts substrate. Asp233 provides a ligand contact to Ca(2+). The interval 237-440 (NNATIDKYFK…LRKSNPAIAY (204 aa)) is A2. Arg261 contributes to the substrate binding site. Asp263 functions as the Nucleophile in the catalytic mechanism. 266–267 (KH) lines the substrate pocket. His267 provides a ligand contact to Ca(2+). Residue Glu291 is the Proton donor of the active site. His361, Asp405, and Arg409 together coordinate substrate. The c stretch occupies residues 441–528 (GSTQQRWINN…ATAVWQYTAA (88 aa)). The tract at residues 529-614 (ETTPTIGHVG…SNAYNHFTIL (86 aa)) is d. The IPT/TIG domain occupies 532 to 612 (PTIGHVGPVM…VNSNAYNHFT (81 aa)). The CBM20 domain maps to 613–718 (ILTGDQVTVR…GTATVTVNWQ (106 aa)). Positions 615 to 718 (TGDQVTVRFV…GTATVTVNWQ (104 aa)) are e.

Belongs to the glycosyl hydrolase 13 family. Monomer. Requires Ca(2+) as cofactor.

The protein localises to the secreted. It carries out the reaction Cyclizes part of a (1-&gt;4)-alpha-D-glucan chain by formation of a (1-&gt;4)-alpha-D-glucosidic bond.. In Bacillus sp. (strain 6.6.3), this protein is Cyclomaltodextrin glucanotransferase (cgt).